The following is a 378-amino-acid chain: MPTLRRLDISEFRNLRSATLQPGEGINLISGENGSGKTSILESISVLAHGRSFRTHKFRRLINNDEKSFTLFGQIFEGTTRNIGLSRASNGDIQIRIDSKAAHTATELAECLPLLVMNSASFQLLEGSGQVRRKFFDWLVFHVKQEFKHYWKLYARCIKQRNSLLRRDKITRSELLPWDQELTKAAQHIESMRSEVFELFQTHFLNEIGQFDFTETLGAELSCTYVSGWSKTGNYNEQLEDQFERDVAAGYTHIGSHKSDVKINLARVPAVEELSRGQQKSVIVALFLAEALVFRTTTGRTPVFLLDDLPAELDEKNLRIVGKALKNLGSQVFATAIDPKSILTGWELVDDESLRMFHVKHGQVELKNDITLRDSFLL.

31–38 (GENGSGKT) serves as a coordination point for ATP.

It belongs to the RecF family.

It localises to the cytoplasm. In terms of biological role, the RecF protein is involved in DNA metabolism; it is required for DNA replication and normal SOS inducibility. RecF binds preferentially to single-stranded, linear DNA. It also seems to bind ATP. The protein is DNA replication and repair protein RecF of Teredinibacter turnerae (strain ATCC 39867 / T7901).